Consider the following 174-residue polypeptide: ATP-dependent protease subunit HslV (174 aa).

Threonine 2 is an active-site residue. Alanine 157, cysteine 160, and threonine 163 together coordinate Na(+).

This sequence belongs to the peptidase T1B family. HslV subfamily. As to quaternary structure, a double ring-shaped homohexamer of HslV is capped on each side by a ring-shaped HslU homohexamer. The assembly of the HslU/HslV complex is dependent on binding of ATP.

It is found in the cytoplasm. The catalysed reaction is ATP-dependent cleavage of peptide bonds with broad specificity.. Allosterically activated by HslU binding. Functionally, protease subunit of a proteasome-like degradation complex believed to be a general protein degrading machinery. This chain is ATP-dependent protease subunit HslV, found in Shewanella baltica (strain OS195).